Here is a 56-residue protein sequence, read N- to C-terminus: Sec-independent protein translocase protein TatA (56 aa).

A helical membrane pass occupies residues 1-21; the sequence is MALGPWQIFLILVIILVLFGA.

This sequence belongs to the TatA/E family. In terms of assembly, the Tat system comprises two distinct complexes: a TatABC complex, containing multiple copies of TatA, TatB and TatC subunits, and a separate TatA complex, containing only TatA subunits. Substrates initially bind to the TatABC complex, which probably triggers association of the separate TatA complex to form the active translocon.

The protein resides in the cell inner membrane. Functionally, part of the twin-arginine translocation (Tat) system that transports large folded proteins containing a characteristic twin-arginine motif in their signal peptide across membranes. TatA could form the protein-conducting channel of the Tat system. The sequence is that of Sec-independent protein translocase protein TatA from Ehrlichia ruminantium (strain Welgevonden).